A 51-amino-acid polypeptide reads, in one-letter code: uncharacterized protein (51 aa).

Residues 1–51 (MARTNVKLCPPKRSKRPSNSRSKSTSHSNRRSLNSLRRTRTSRRSNNGKFT) are disordered. Residues 19 to 36 (NSRSKSTSHSNRRSLNSL) are compositionally biased toward low complexity.

This is an uncharacterized protein from Bdellovibrio bacteriovorus (Bacteriophage phiMH2K).